Consider the following 78-residue polypeptide: DNA-directed RNA polymerase subunit omega (78 aa).

The protein belongs to the RNA polymerase subunit omega family. In cyanobacteria the RNAP catalytic core is composed of 2 alpha, 1 beta, 1 beta', 1 gamma and 1 omega subunit. When a sigma factor is associated with the core the holoenzyme is formed, which can initiate transcription.

The enzyme catalyses RNA(n) + a ribonucleoside 5'-triphosphate = RNA(n+1) + diphosphate. Its function is as follows. Promotes RNA polymerase assembly. Latches the N- and C-terminal regions of the beta' subunit thereby facilitating its interaction with the beta and alpha subunits. The polypeptide is DNA-directed RNA polymerase subunit omega (Prochlorococcus marinus (strain AS9601)).